Reading from the N-terminus, the 254-residue chain is MASKALSSFTAKPAVSLLPHGVSSSASPSVMSLSFSRHTGGRGVVAASSTVDTNNMPMTGVVFQPFEEVKKADLAIPITSNASLARQRYADSSEAAINEQINVEYNVSYVYHSMYAYFDRDNVALKGLAKFFKESSDEEREHAEKFMEYQNQRGGRVTLHPIVSPISDFEHAEKGDALYAMELALSLEKLTNEKLLNLHRVASENNDPQLADFVESEFLGEQIEAIKKISDFITQLRMVGKGHGVWHFDQMLLN.

The N-terminal 47 residues, 1-47, are a transit peptide targeting the chloroplast; sequence MASKALSSFTAKPAVSLLPHGVSSSASPSVMSLSFSRHTGGRGVVAA. The segment at 48–86 is extension peptide (EP); sequence SSTVDTNNMPMTGVVFQPFEEVKKADLAIPITSNASLAR. Residues 87–240 form the Ferritin-like diiron domain; the sequence is QRYADSSEAA…DFITQLRMVG (154 aa). Fe cation contacts are provided by glutamate 104, glutamate 139, histidine 142, glutamate 188, and glutamine 222.

It belongs to the ferritin family. In terms of assembly, oligomer of 24 subunits. There are two types of subunits: L (light) chain and H (heavy) chain. The major chain can be light or heavy, depending on the species and tissue type. The functional molecule forms a roughly spherical shell with a diameter of 12 nm and contains a central cavity into which the insoluble mineral iron core is deposited.

The protein localises to the plastid. It localises to the chloroplast. It carries out the reaction 4 Fe(2+) + O2 + 4 H(+) = 4 Fe(3+) + 2 H2O. Stores iron in a soluble, non-toxic, readily available form. Important for iron homeostasis. Has ferroxidase activity. Iron is taken up in the ferrous form and deposited as ferric hydroxides after oxidation. This is Ferritin-1, chloroplastic (LSC30) from Brassica napus (Rape).